Here is a 465-residue protein sequence, read N- to C-terminus: Adenosine 3'-phospho 5'-phosphosulfate transporter 1 (465 aa).

The next 10 membrane-spanning stretches (helical) occupy residues 13 to 33 (LVIC…SDLL), 61 to 81 (FLKL…GFLI), 142 to 162 (AVQL…WGVL), 185 to 205 (QFLV…YLQW), 270 to 290 (SYEY…MSGS), 299 to 319 (VTTL…SFTA), 339 to 359 (GVNL…GGFM), 370 to 390 (KFVF…LFIY), 391 to 407 (HTID…IMTL), and 424 to 444 (ISLL…LRVY).

The protein belongs to the nucleotide-sugar transporter family. SLC35B subfamily. In terms of tissue distribution, expressed throughout embryogenesis. During oogenesis, it is expressed strongly in the nurse cells of the germline. Maternally expressed at the syncytial blastoderm stage. Zygotically expressed, from after germ-band elongation in the invaginating salivary gland placodes. Remains expressed predominantly in this tissue throughout embryogenesis, but low-level expression may also be present throughout the embryo.

The protein resides in the golgi apparatus membrane. In terms of biological role, mediates the transport of adenosine 3'-phospho 5'-phosphosulfate (PAPS), from cytosol into Golgi. PAPS is a universal sulfuryl donor for sulfation events that take place in the Golgi. Required for the dorsoventral patterning, suggesting that it mediates the transport of the sulfate donor required for the sulfotransferase activity of pip (pipe). This is Adenosine 3'-phospho 5'-phosphosulfate transporter 1 (sll) from Drosophila melanogaster (Fruit fly).